The chain runs to 250 residues: AA9 family lytic polysaccharide monooxygenase AA17 (250 aa).

Residues 1–21 (MAMSKIVSLTGLLASASLVAG) form the signal peptide. Cu(2+)-binding residues include H22 and H107. Intrachain disulfides connect C77-C199 and C118-C122. An N-linked (GlcNAc...) asparagine glycan is attached at N159. Residues H185 and Q194 each contribute to the O2 site. Y196 is a binding site for Cu(2+).

It belongs to the polysaccharide monooxygenase AA9 family. Requires Cu(2+) as cofactor.

The protein localises to the secreted. Its function is as follows. Lytic polysaccharide monooxygenase (LPMO) that exhibits oxidative cleavage beta-O-4 linkage of lignin resulting in the formation of aromatic compound guaiacol. Catalysis by LPMOs requires the reduction of the active-site copper from Cu(II) to Cu(I) by a reducing agent and H(2)O(2) or O(2) as a cosubstrate. Does not use cellulose, cello-oligosaccharides, xyloglucan, xylan, chitin nor starch as substrates. Able to depolymerize the lignin dimer guaicyl glycerol beta-guaicyl ether (GGE). This chain is AA9 family lytic polysaccharide monooxygenase AA17, found in Aspergillus oryzae (strain ATCC 42149 / RIB 40) (Yellow koji mold).